A 632-amino-acid polypeptide reads, in one-letter code: MAKLTKPKTEGILHKGQSLYEYLDARVLTSKPFGAAGDATTDDTEVIAASLNSQKAVTISDGVFSSSGINSNYCNLDGRGSGVLSHRSSTGNYLVFNNPRTGRLSNITVESNKATDTTQGQQVSLAGGSDVTVSDVNFSNVKGTGFSLIAYPNDAPPDGLMIKGIRGSYSGYATNKAAGCVLADSSVNSLIDNVIAKNYPQFGAVELKGTASYNIVSNVIGADCQHVTYNGTEGPIAPSNNLIKGVMANNPKYAAVVAGKGSTNLISDVLVDYSTSDARQAHGVTVEGSDNVINNVLMSGCDGTNSLGQRQTATIARFIGTANNNYASVFPSYSATGVITFESGSTRNFVEVKHPGRRNDLLSSASTIDGAATIDGTSNSNVVHAPALGQYIGSMSGRFEWRIKSMSLPSGVLTSADKYRMLGDGAVSLAVGGGTSSQVRLFTSDGTSRTVSLTNGNVRLSTSSTGYLQLGADAMTPDSTGTYALGSASRAWSGGFTQAAFTVTSDARCKTEPLTISDALLDAWSEVDFVQFQYLDRVEEKGADSARWHFGIIAQRAKEAFERHGIDAHRYGFLCFDSWDDVYEEDANGSRKLITPAGSRYGIRYEEVLILEAALMRRTIKRMQEALAALPK.

One can recognise a Peptidase S74 domain in the interval 505–630; it reads SDARCKTEPL…KRMQEALAAL (126 aa).

In terms of assembly, homotrimer. Proteolytic cleavage and release of the chaperone in the host cytosol stabilizes the folded protein. The cleavage gives rise to the mature tail spike protein but is not essential for catalytic activity.

The protein localises to the virion. Functionally, functions as a receptor binding protein (RBP) and probably mediates the attachment to the host capsular exopolysaccharides. Displays a depolymerase activity that specifically degrades the K5-type polysaccharides of Escherichia coli capsule. The C-terminal chaperone protein mediates homotrimerization and proper folding of the catalytic trimer. The sequence is that of Tail spike protein (kflA) from Escherichia virus K5 (Bacteriophage K5).